The following is a 337-amino-acid chain: Eukaryotic translation initiation factor 3 subunit I (337 aa).

WD repeat units follow at residues Gly-8 to Thr-47, Gly-50 to Asp-91, Cys-147 to Asn-186, Glu-191 to Thr-230, and Gly-288 to Met-327.

The protein belongs to the eIF-3 subunit I family. Component of the eukaryotic translation initiation factor 3 (eIF-3) complex.

The protein localises to the cytoplasm. Component of the eukaryotic translation initiation factor 3 (eIF-3) complex, which is involved in protein synthesis of a specialized repertoire of mRNAs and, together with other initiation factors, stimulates binding of mRNA and methionyl-tRNAi to the 40S ribosome. The eIF-3 complex specifically targets and initiates translation of a subset of mRNAs involved in cell proliferation. In Aspergillus niger (strain ATCC MYA-4892 / CBS 513.88 / FGSC A1513), this protein is Eukaryotic translation initiation factor 3 subunit I (tif34).